We begin with the raw amino-acid sequence, 172 residues long: S-ribosylhomocysteine lyase (172 aa).

3 residues coordinate Fe cation: histidine 54, histidine 58, and cysteine 128.

Belongs to the LuxS family. Homodimer. It depends on Fe cation as a cofactor.

It carries out the reaction S-(5-deoxy-D-ribos-5-yl)-L-homocysteine = (S)-4,5-dihydroxypentane-2,3-dione + L-homocysteine. Its function is as follows. Involved in the synthesis of autoinducer 2 (AI-2) which is secreted by bacteria and is used to communicate both the cell density and the metabolic potential of the environment. The regulation of gene expression in response to changes in cell density is called quorum sensing. Catalyzes the transformation of S-ribosylhomocysteine (RHC) to homocysteine (HC) and 4,5-dihydroxy-2,3-pentadione (DPD). The protein is S-ribosylhomocysteine lyase of Photobacterium profundum (strain SS9).